A 569-amino-acid chain; its full sequence is Phosphatase and actin regulator 2 (569 aa).

Residues 1–13 (MGQTSVSALSPQP) show a composition bias toward polar residues. Residues 1–47 (MGQTSVSALSPQPGSVDGLDKASIANSDGPPAGSQTPPFKRKGKLST) are disordered. S27 is modified (phosphoserine). T36 carries the phosphothreonine modification. The stretch at 71–96 (AVLERKISTRQSREELIRRGLLKELP) is one RPEL 1 repeat. Disordered regions lie at residues 98–253 (QDGD…TGKP) and 295–483 (PTLP…QEAK). Positions 140 to 151 (GPPREEQAEEKT) are enriched in basic and acidic residues. Positions 162–176 (GSKASSSPSASSTSS) are enriched in low complexity. A compositionally biased stretch (polar residues) spans 212 to 224 (LSPNTVTSETSSL). S357 is subject to Phosphoserine. Positions 386–399 (TDDDDEEDDDDDST) are enriched in acidic residues. RPEL repeat units follow at residues 412-437 (DTLA…QRTS), 450-475 (TKLV…KQKN), and 488-513 (RRLS…RFNE). Residues 423-444 (SKKELEDKNILQRTSEEERQEL) are compositionally biased toward basic and acidic residues. At S457 the chain carries Phosphoserine. The span at 461–483 (TTEELEQRSILKQKNEEEEQEAK) shows a compositional bias: basic and acidic residues. Position 495 is a phosphoserine (S495).

This sequence belongs to the phosphatase and actin regulator family. As to quaternary structure, binds PPP1CA and actin. Expressed in the brain with high levels in the cerebellum, specifically in the Purkinje cell layer, choroid plexus and thalamus (ventral, rhomboid and anterior nuclei). Moderate to high expression in the hippocampus, piriform cortex, olfactory bulb, entorhinal cortex, as well as in geniculate bodies, lamboid septal zone, preoptic area and ventral pallidum (at protein level).

The chain is Phosphatase and actin regulator 2 (Phactr2) from Rattus norvegicus (Rat).